A 439-amino-acid chain; its full sequence is Kelch domain-containing protein 10 (439 aa).

Residues 1-50 form a disordered region; it reads MSAAQGWDRNRRRGGGAAGGASGVSGAGAAGGGRGTGQLNRFVQLSGRPH. At Arg13 the chain carries Omega-N-methylarginine. Residues 15 to 36 show a composition bias toward gly residues; it reads GGAAGGASGVSGAGAAGGGRGT. 6 Kelch repeats span residues 87–154, 155–198, 199–260, 261–319, 320–364, and 365–403; these read PARS…LASM, SLVL…SCRG, KRPS…RYRH, EIAH…HSCV, QIKN…VYFH, and CAAVTPAGCMYIHGGVVNIHENKRTGSLFKIWLVVPSLL. The tract at residues 398–439 is interaction with CUL2; that stretch reads VVPSLLELAWEKLLAAFPNLANLSRTQLLHLGLTQELIERLK.

It belongs to the KLHDC10 family. Component of a CRL2 E3 ubiquitin-protein ligase complex, also named ECS (Elongin BC-CUL2/5-SOCS-box protein) complex, composed of CUL2, Elongin BC (ELOB and ELOC), RBX1 and substrate-specific adapter KLHDC10. Interacts (via the 6 Kelch repeats) with PPP5C.

It localises to the nucleus. The protein localises to the cytoplasm. It participates in protein modification; protein ubiquitination. Substrate-recognition component of a Cul2-RING (CRL2) E3 ubiquitin-protein ligase complex of the DesCEND (destruction via C-end degrons) pathway, which recognizes a C-degron located at the extreme C-terminus of target proteins, leading to their ubiquitination and degradation. The C-degron recognized by the DesCEND pathway is usually a motif of less than ten residues and can be present in full-length proteins, truncated proteins or proteolytically cleaved forms. The CRL2(KLHDC10) complex specifically recognizes proteins with a proline-glycine (Pro-Gly) or an alanine tail (CAT tail) at the C-terminus, leading to their ubiquitination and degradation. The CRL2(KLHDC10) complex is involved in the ribosome-associated quality control (RQC) pathway, which mediates the extraction of incompletely synthesized nascent chains from stalled ribosomes: CRL2(KLHDC10) acts downstream of NEMF and recognizes CAT tails associated with stalled nascent chains, leading to their ubiquitination and degradation. Participates in the oxidative stress-induced cell death through MAP3K5 activation. Inhibits PPP5C phosphatase activity on MAP3K5. Acts as a regulator of necroptosis. This Mus musculus (Mouse) protein is Kelch domain-containing protein 10.